We begin with the raw amino-acid sequence, 299 residues long: Cytidine deaminase (299 aa).

2 consecutive CMP/dCMP-type deaminase domains span residues 56 to 176 and 194 to 299; these read SKIE…FGPK and LQGD…YIAV. 97–99 provides a ligand contact to substrate; sequence NQE. A Zn(2+)-binding site is contributed by His110. Catalysis depends on Glu112, which acts as the Proton donor. 2 residues coordinate Zn(2+): Cys137 and Cys140.

It belongs to the cytidine and deoxycytidylate deaminase family. As to quaternary structure, homodimer. The cofactor is Zn(2+).

It carries out the reaction cytidine + H2O + H(+) = uridine + NH4(+). The catalysed reaction is 2'-deoxycytidine + H2O + H(+) = 2'-deoxyuridine + NH4(+). This enzyme scavenges exogenous and endogenous cytidine and 2'-deoxycytidine for UMP synthesis. The protein is Cytidine deaminase of Haemophilus ducreyi (strain 35000HP / ATCC 700724).